A 354-amino-acid chain; its full sequence is Protein RecA (354 aa).

78-85 is a binding site for ATP; that stretch reads GPESSGKT.

This sequence belongs to the RecA family.

The protein localises to the cytoplasm. Its function is as follows. Can catalyze the hydrolysis of ATP in the presence of single-stranded DNA, the ATP-dependent uptake of single-stranded DNA by duplex DNA, and the ATP-dependent hybridization of homologous single-stranded DNAs. It interacts with LexA causing its activation and leading to its autocatalytic cleavage. The protein is Protein RecA of Zymomonas mobilis subsp. mobilis (strain ATCC 31821 / ZM4 / CP4).